The primary structure comprises 421 residues: UDP-N-acetylglucosamine 1-carboxyvinyltransferase (421 aa).

Phosphoenolpyruvate is bound at residue 22–23 (KN). Arginine 93 provides a ligand contact to UDP-N-acetyl-alpha-D-glucosamine. Cysteine 117 acts as the Proton donor in catalysis. Residue cysteine 117 is modified to 2-(S-cysteinyl)pyruvic acid O-phosphothioketal. Residues 122–126 (RPVDL), aspartate 308, and valine 330 each bind UDP-N-acetyl-alpha-D-glucosamine.

It belongs to the EPSP synthase family. MurA subfamily.

The protein resides in the cytoplasm. It catalyses the reaction phosphoenolpyruvate + UDP-N-acetyl-alpha-D-glucosamine = UDP-N-acetyl-3-O-(1-carboxyvinyl)-alpha-D-glucosamine + phosphate. Its pathway is cell wall biogenesis; peptidoglycan biosynthesis. In terms of biological role, cell wall formation. Adds enolpyruvyl to UDP-N-acetylglucosamine. The chain is UDP-N-acetylglucosamine 1-carboxyvinyltransferase from Ectopseudomonas mendocina (strain ymp) (Pseudomonas mendocina).